The sequence spans 911 residues: Protein translocase subunit SecA (911 aa).

ATP is bound by residues glutamine 87, 105-109 (GEGKT), and aspartate 510. The Zn(2+) site is built by cysteine 896, cysteine 898, cysteine 907, and histidine 908.

Belongs to the SecA family. In terms of assembly, monomer and homodimer. Part of the essential Sec protein translocation apparatus which comprises SecA, SecYEG and auxiliary proteins SecDF-YajC and YidC. Zn(2+) is required as a cofactor.

The protein resides in the cell inner membrane. The protein localises to the cytoplasm. The catalysed reaction is ATP + H2O + cellular proteinSide 1 = ADP + phosphate + cellular proteinSide 2.. Its function is as follows. Part of the Sec protein translocase complex. Interacts with the SecYEG preprotein conducting channel. Has a central role in coupling the hydrolysis of ATP to the transfer of proteins into and across the cell membrane, serving both as a receptor for the preprotein-SecB complex and as an ATP-driven molecular motor driving the stepwise translocation of polypeptide chains across the membrane. In Acinetobacter baumannii (strain SDF), this protein is Protein translocase subunit SecA.